Reading from the N-terminus, the 323-residue chain is MADAPTRATTSRVDSDLDAQSPAADLVRVYLNGIGKTALLNAAGEVELAKRIEAGLYAEHLLETRKRLGENRKRDLAAVVRDGEAARRHLLEANLRLVVSLAKRYTGRGMPLLDLIQEGNLGLIRAMEKFDYTKGFKFSTYATWWIRQAITRGMADQSRTIRLPVHLVEQVNKLARIKREMHQHLGREATDEELAAESGIPIDKINDLLEHSRDPVSLDMPVGSEEEAPLGDFIEDAEAMSAENAVIAELLHTDIRSVLATLDEREHQVIRLRFGLDDGQPRTLDQIGKLFGLSRERVRQIERDVMSKLRHGERADRLRSYAS.

Positions Met-1–Ala-228 are sufficient to interact with RbpA. The segment at Asp-25 to Glu-59 is sigma-70 factor domain-1. A sigma-70 factor domain-2 region spans residues Leu-90–Thr-160. Residues Asp-114–Gln-117 carry the Polymerase core binding motif. The interval Glu-169–Ala-245 is sigma-70 factor domain-3. Positions Val-258–His-311 are sigma-70 factor domain-4. The segment at residues Leu-284–Arg-303 is a DNA-binding region (H-T-H motif).

This sequence belongs to the sigma-70 factor family. In terms of assembly, monomer. Interacts transiently with the RNA polymerase catalytic core formed by RpoA, RpoB, RpoC and RpoZ (2 alpha, 1 beta, 1 beta' and 1 omega subunit) to form the RNA polymerase holoenzyme that can initiate transcription.

Functionally, sigma factors are initiation factors that promote the attachment of RNA polymerase to specific initiation sites and are then released. A non-essential principal sigma factor that responds to cell envelope stress and hypoxia. The sequence is that of RNA polymerase sigma factor SigB (sigB) from Mycobacterium tuberculosis (strain CDC 1551 / Oshkosh).